Reading from the N-terminus, the 185-residue chain is UPF0397 protein CPF_1836 (185 aa).

5 helical membrane-spanning segments follow: residues Ile-11–Pro-31, Ala-44–Ile-64, Ile-71–Ile-91, Ile-111–Pro-131, and Gly-149–Ala-169.

Belongs to the UPF0397 family.

The protein resides in the cell membrane. This chain is UPF0397 protein CPF_1836, found in Clostridium perfringens (strain ATCC 13124 / DSM 756 / JCM 1290 / NCIMB 6125 / NCTC 8237 / Type A).